A 133-amino-acid chain; its full sequence is Agglutinin alpha chain (133 aa).

The Jacalin-type lectin domain maps to Gly1–Leu133.

This sequence belongs to the jacalin lectin family. In terms of assembly, formed of four alpha chains and four beta chains.

In terms of biological role, D-galactose-specific lectin, binds the T-antigen structure Gal-beta1,3-GalNAc. The chain is Agglutinin alpha chain from Maclura pomifera (Osage orange).